The sequence spans 326 residues: tRNA-modifying protein YgfZ (326 aa).

2 residues coordinate folate: tryptophan 27 and tryptophan 189.

Belongs to the tRNA-modifying YgfZ family.

It localises to the cytoplasm. Folate-binding protein involved in regulating the level of ATP-DnaA and in the modification of some tRNAs. It is probably a key factor in regulatory networks that act via tRNA modification, such as initiation of chromosomal replication. The polypeptide is tRNA-modifying protein YgfZ (Shigella boydii serotype 4 (strain Sb227)).